A 326-amino-acid polypeptide reads, in one-letter code: MSQYIVCALYKFVSLEDYTEIRQPLTQVMEDNQIRGTLLLASEGINGTVAGSRKAIDTLLTWFKEDSRLADVVYKESINDVQPFNRTKVKLKKEIVTMGVEGIDPLHVVGTYVKPADWNALISDPDVLLVDTRNDYEVDIGTFKYAVNPKTETFRDFPQYVAENLDPAKHKKVAMFCTGGIRCEKSTAYMKEQGFDEVYHLEGGILKYLEEVPEENSLWEGDCYVFDGRVAVNHQLEKSHYDVCNACRLPITDEDKQSDSFEKGVSCPKCIDQHTEEQKSRFREREKQVQLANERGETHVGGDAAKLIEQRKQEKKEKKQQQRSSK.

The region spanning 123–217 (SDPDVLLVDT…YLEEVPEENS (95 aa)) is the Rhodanese domain. Cys177 acts as the Cysteine persulfide intermediate in catalysis. A compositionally biased stretch (basic and acidic residues) spans 276-320 (EEQKSRFREREKQVQLANERGETHVGGDAAKLIEQRKQEKKEKKQ). Positions 276 to 326 (EEQKSRFREREKQVQLANERGETHVGGDAAKLIEQRKQEKKEKKQQQRSSK) are disordered.

It belongs to the TrhO family.

The catalysed reaction is uridine(34) in tRNA + AH2 + O2 = 5-hydroxyuridine(34) in tRNA + A + H2O. Its function is as follows. Catalyzes oxygen-dependent 5-hydroxyuridine (ho5U) modification at position 34 in tRNAs. The polypeptide is tRNA uridine(34) hydroxylase (Aliivibrio salmonicida (strain LFI1238) (Vibrio salmonicida (strain LFI1238))).